A 189-amino-acid polypeptide reads, in one-letter code: Protein GrpE (189 aa).

A disordered region spans residues 1–31; sequence MSKKHMKGNGGEVPENSEMSGSEELVAVEPG.

Belongs to the GrpE family. Homodimer.

The protein localises to the cytoplasm. Functionally, participates actively in the response to hyperosmotic and heat shock by preventing the aggregation of stress-denatured proteins, in association with DnaK and GrpE. It is the nucleotide exchange factor for DnaK and may function as a thermosensor. Unfolded proteins bind initially to DnaJ; upon interaction with the DnaJ-bound protein, DnaK hydrolyzes its bound ATP, resulting in the formation of a stable complex. GrpE releases ADP from DnaK; ATP binding to DnaK triggers the release of the substrate protein, thus completing the reaction cycle. Several rounds of ATP-dependent interactions between DnaJ, DnaK and GrpE are required for fully efficient folding. The sequence is that of Protein GrpE from Syntrophobacter fumaroxidans (strain DSM 10017 / MPOB).